The sequence spans 271 residues: ATP synthase subunit delta (271 aa).

This sequence belongs to the ATPase delta chain family. As to quaternary structure, F-type ATPases have 2 components, F(1) - the catalytic core - and F(0) - the membrane proton channel. F(1) has five subunits: alpha(3), beta(3), gamma(1), delta(1), epsilon(1). F(0) has three main subunits: a(1), b(2) and c(10-14). The alpha and beta chains form an alternating ring which encloses part of the gamma chain. F(1) is attached to F(0) by a central stalk formed by the gamma and epsilon chains, while a peripheral stalk is formed by the delta and b chains.

The protein localises to the cell membrane. F(1)F(0) ATP synthase produces ATP from ADP in the presence of a proton or sodium gradient. F-type ATPases consist of two structural domains, F(1) containing the extramembraneous catalytic core and F(0) containing the membrane proton channel, linked together by a central stalk and a peripheral stalk. During catalysis, ATP synthesis in the catalytic domain of F(1) is coupled via a rotary mechanism of the central stalk subunits to proton translocation. Its function is as follows. This protein is part of the stalk that links CF(0) to CF(1). It either transmits conformational changes from CF(0) to CF(1) or is implicated in proton conduction. The polypeptide is ATP synthase subunit delta (Streptomyces griseus subsp. griseus (strain JCM 4626 / CBS 651.72 / NBRC 13350 / KCC S-0626 / ISP 5235)).